A 404-amino-acid chain; its full sequence is MDYSEIMVRHGELSTKGKNRMRFINKLKNNIQDVLAPFPAIAVRSDRDRTHVSLNGTDYQPIVEALKLVFGVQALSPVYKLEKSVPLLVTAVQDIMTSLYRDGLTFKIATKRSDHAFELDSRELNSLLGGAVFEVLPNIQAQMKHPDVTLKVEIRDEAAYISYEEIKGAGGLPVGTSGKGMLMLSGGIDSPVAGYLALKRGLDIEVVHFASPPYTSPGALAKAQDLTRRLTRFGGNIQFIEVPFTEIQEEIKNKAPEAYLMTLTRRFMMRITDAIREQRKGLVIVNGESLGQVASQTLESMQAINAVTSTPIIRPVVTMDKLEIIEMAQAIDTFDISIQPFEDCCTIFAPDRPKTNPKLGNAEKYEERFDIDGLVQRAVSGIVVTEITPEIVNDEVENLIDALL.

The 106-residue stretch at 60-165 (QPIVEALKLV…DEAAYISYEE (106 aa)) folds into the THUMP domain. ATP contacts are provided by residues 183-184 (ML), 208-209 (HF), R265, G287, and Q296.

This sequence belongs to the ThiI family.

It localises to the cytoplasm. It carries out the reaction [ThiI sulfur-carrier protein]-S-sulfanyl-L-cysteine + a uridine in tRNA + 2 reduced [2Fe-2S]-[ferredoxin] + ATP + H(+) = [ThiI sulfur-carrier protein]-L-cysteine + a 4-thiouridine in tRNA + 2 oxidized [2Fe-2S]-[ferredoxin] + AMP + diphosphate. The enzyme catalyses [ThiS sulfur-carrier protein]-C-terminal Gly-Gly-AMP + S-sulfanyl-L-cysteinyl-[cysteine desulfurase] + AH2 = [ThiS sulfur-carrier protein]-C-terminal-Gly-aminoethanethioate + L-cysteinyl-[cysteine desulfurase] + A + AMP + 2 H(+). It functions in the pathway cofactor biosynthesis; thiamine diphosphate biosynthesis. Functionally, catalyzes the ATP-dependent transfer of a sulfur to tRNA to produce 4-thiouridine in position 8 of tRNAs, which functions as a near-UV photosensor. Also catalyzes the transfer of sulfur to the sulfur carrier protein ThiS, forming ThiS-thiocarboxylate. This is a step in the synthesis of thiazole, in the thiamine biosynthesis pathway. The sulfur is donated as persulfide by IscS. The sequence is that of Probable tRNA sulfurtransferase from Streptococcus pyogenes serotype M12 (strain MGAS2096).